Here is a 60-residue protein sequence, read N- to C-terminus: Sperm protamine P1 (60 aa).

A disordered region spans residues 1–60 (MARYRHSRSRSRSRYRRRRRRRSRYRSRRRRXRRRRRSRRGRRRRGYSRRRYSRRRRRRY).

Belongs to the protamine P1 family. As to expression, testis.

It localises to the nucleus. The protein resides in the chromosome. In terms of biological role, protamines substitute for histones in the chromatin of sperm during the haploid phase of spermatogenesis. They compact sperm DNA into a highly condensed, stable and inactive complex. The polypeptide is Sperm protamine P1 (PRM1) (Petrogale concinna (Nabarlek)).